The primary structure comprises 245 residues: Ribonuclease PH (245 aa).

Phosphate contacts are provided by residues arginine 93 and glycine 131–arginine 133.

The protein belongs to the RNase PH family. As to quaternary structure, homohexameric ring arranged as a trimer of dimers.

It carries out the reaction tRNA(n+1) + phosphate = tRNA(n) + a ribonucleoside 5'-diphosphate. Phosphorolytic 3'-5' exoribonuclease that plays an important role in tRNA 3'-end maturation. Removes nucleotide residues following the 3'-CCA terminus of tRNAs; can also add nucleotides to the ends of RNA molecules by using nucleoside diphosphates as substrates, but this may not be physiologically important. Probably plays a role in initiation of 16S rRNA degradation (leading to ribosome degradation) during starvation. The polypeptide is Ribonuclease PH (Corynebacterium glutamicum (strain R)).